A 417-amino-acid polypeptide reads, in one-letter code: UDP-N-acetylglucosamine 1-carboxyvinyltransferase (417 aa).

22–23 (KN) is a binding site for phosphoenolpyruvate. Arginine 93 is a binding site for UDP-N-acetyl-alpha-D-glucosamine. Cysteine 117 (proton donor) is an active-site residue. Cysteine 117 carries the 2-(S-cysteinyl)pyruvic acid O-phosphothioketal modification. UDP-N-acetyl-alpha-D-glucosamine is bound by residues 122 to 126 (RPVDQ), aspartate 305, and isoleucine 327.

This sequence belongs to the EPSP synthase family. MurA subfamily.

The protein resides in the cytoplasm. The catalysed reaction is phosphoenolpyruvate + UDP-N-acetyl-alpha-D-glucosamine = UDP-N-acetyl-3-O-(1-carboxyvinyl)-alpha-D-glucosamine + phosphate. Its pathway is cell wall biogenesis; peptidoglycan biosynthesis. Functionally, cell wall formation. Adds enolpyruvyl to UDP-N-acetylglucosamine. This is UDP-N-acetylglucosamine 1-carboxyvinyltransferase from Nitrosomonas eutropha (strain DSM 101675 / C91 / Nm57).